We begin with the raw amino-acid sequence, 430 residues long: Mannosylglucosylglycerate synthase (430 aa).

It belongs to the glycosyltransferase group 1 family. The cofactor is a divalent metal cation.

The catalysed reaction is (2R)-2-O-(alpha-D-glucopyranosyl)-glycerate + GDP-alpha-D-mannose = (2R)-2-O-[alpha-D-mannopyranosyl-(1-&gt;2)-alpha-D-glucopyranosyl]-glycerate + GDP + H(+). In terms of biological role, involved in the biosynthesis of the compatible solute mannosylglucosylglycerate through a nonphosphorylating pathway. Catalyzes the synthesis of mannosylglucosylglycerate (MGG) from glucosylglycerate (GG) and GDP-mannose. This Petrotoga mobilis (strain DSM 10674 / SJ95) protein is Mannosylglucosylglycerate synthase.